A 398-amino-acid polypeptide reads, in one-letter code: uncharacterized protein (398 aa).

This is an uncharacterized protein from Neisseria meningitidis serogroup B (strain ATCC BAA-335 / MC58).